Consider the following 369-residue polypeptide: Anhydro-N-acetylmuramic acid kinase (369 aa).

12-19 (GTSMDGVD) is a binding site for ATP.

It belongs to the anhydro-N-acetylmuramic acid kinase family.

The enzyme catalyses 1,6-anhydro-N-acetyl-beta-muramate + ATP + H2O = N-acetyl-D-muramate 6-phosphate + ADP + H(+). The protein operates within amino-sugar metabolism; 1,6-anhydro-N-acetylmuramate degradation. Its pathway is cell wall biogenesis; peptidoglycan recycling. Catalyzes the specific phosphorylation of 1,6-anhydro-N-acetylmuramic acid (anhMurNAc) with the simultaneous cleavage of the 1,6-anhydro ring, generating MurNAc-6-P. Is required for the utilization of anhMurNAc either imported from the medium or derived from its own cell wall murein, and thus plays a role in cell wall recycling. This is Anhydro-N-acetylmuramic acid kinase from Shewanella sp. (strain ANA-3).